We begin with the raw amino-acid sequence, 170 residues long: MSTLLIALIALIVLLIIILVVFLYYKKQQPPKKVCKVDKDCGSREHCVRGTCSSLSCLDAVKMDKRDVKMDSKISSCKFTPNFYHFTDTAAEQEFGKTWHSIKITPSPGESHTSQEICERYCLWGTDDCTGWEYFGDEKNGTCNIYNNPYLALKYTKDHVLYLPRNHKYA.

Residues 1 to 3 (MST) are Intravirion-facing. Residues 4–24 (LLIALIALIVLLIIILVVFLY) traverse the membrane as a helical segment. At 25–170 (YKKQQPPKKV…LYLPRNHKYA (146 aa)) the chain is on the virion surface side.

This sequence belongs to the asfivirus inner membrane protein p22 family.

It localises to the virion membrane. The protein resides in the host cell membrane. The chain is Inner membrane protein p22 from Ornithodoros (relapsing fever ticks).